A 94-amino-acid chain; its full sequence is Pyrimidine/purine nucleoside phosphorylase (94 aa).

Belongs to the nucleoside phosphorylase PpnP family.

The catalysed reaction is a purine D-ribonucleoside + phosphate = a purine nucleobase + alpha-D-ribose 1-phosphate. It catalyses the reaction adenosine + phosphate = alpha-D-ribose 1-phosphate + adenine. The enzyme catalyses cytidine + phosphate = cytosine + alpha-D-ribose 1-phosphate. It carries out the reaction guanosine + phosphate = alpha-D-ribose 1-phosphate + guanine. The catalysed reaction is inosine + phosphate = alpha-D-ribose 1-phosphate + hypoxanthine. It catalyses the reaction thymidine + phosphate = 2-deoxy-alpha-D-ribose 1-phosphate + thymine. The enzyme catalyses uridine + phosphate = alpha-D-ribose 1-phosphate + uracil. It carries out the reaction xanthosine + phosphate = alpha-D-ribose 1-phosphate + xanthine. Its function is as follows. Catalyzes the phosphorolysis of diverse nucleosides, yielding D-ribose 1-phosphate and the respective free bases. Can use uridine, adenosine, guanosine, cytidine, thymidine, inosine and xanthosine as substrates. Also catalyzes the reverse reactions. This is Pyrimidine/purine nucleoside phosphorylase from Pseudomonas putida (strain ATCC 700007 / DSM 6899 / JCM 31910 / BCRC 17059 / LMG 24140 / F1).